The following is a 392-amino-acid chain: Nicotinate phosphoribosyltransferase (392 aa).

H214 is modified (phosphohistidine; by autocatalysis).

The protein belongs to the NAPRTase family. In terms of processing, transiently phosphorylated on a His residue during the reaction cycle. Phosphorylation strongly increases the affinity for substrates and increases the rate of nicotinate D-ribonucleotide production. Dephosphorylation regenerates the low-affinity form of the enzyme, leading to product release.

It catalyses the reaction nicotinate + 5-phospho-alpha-D-ribose 1-diphosphate + ATP + H2O = nicotinate beta-D-ribonucleotide + ADP + phosphate + diphosphate. It functions in the pathway cofactor biosynthesis; NAD(+) biosynthesis; nicotinate D-ribonucleotide from nicotinate: step 1/1. Its function is as follows. Catalyzes the synthesis of beta-nicotinate D-ribonucleotide from nicotinate and 5-phospho-D-ribose 1-phosphate at the expense of ATP. This is Nicotinate phosphoribosyltransferase from Xanthomonas axonopodis pv. citri (strain 306).